Consider the following 125-residue polypeptide: GKMKFKDCGKGEVTELDITDCSGDFCVIHRGKPLTLEAKFAANQDTTKATIKVLAKVAGTPIQVPGLETDGCKFVKCPIKKGDPIDFKYTTTVPAILPKVKAEVTAELVGDHGVLACGRFGRQVE.

It belongs to the NPC2 family.

The protein resides in the secreted. This is Mite group 2 allergen Gly d 2.02 from Glycyphagus domesticus (House itch mite).